Here is a 254-residue protein sequence, read N- to C-terminus: Alcohol dehydrogenase 1 (254 aa).

10 to 33 is a binding site for NAD(+); that stretch reads FVAGLGGIGFDTSREIVKKGPKNL. S138 provides a ligand contact to substrate. The active-site Proton acceptor is Y151.

It belongs to the short-chain dehydrogenases/reductases (SDR) family. As to quaternary structure, homodimer.

The catalysed reaction is a primary alcohol + NAD(+) = an aldehyde + NADH + H(+). It catalyses the reaction a secondary alcohol + NAD(+) = a ketone + NADH + H(+). In Drosophila mojavensis (Fruit fly), this protein is Alcohol dehydrogenase 1 (Adh1).